The following is a 270-amino-acid chain: Regulatory protein RecX (270 aa).

This sequence belongs to the RecX family.

The protein resides in the cytoplasm. In terms of biological role, modulates RecA activity. This Bacillus mycoides (strain KBAB4) (Bacillus weihenstephanensis) protein is Regulatory protein RecX.